The chain runs to 183 residues: Ubiquitin-conjugating enzyme E2 6 (183 aa).

The 148-residue stretch at 1 to 148 (MASPSKRREM…VKEYCEKYAK (148 aa)) folds into the UBC core domain. Cys-85 serves as the catalytic Glycyl thioester intermediate. The segment at 148 to 183 (KPEEILSDDDDDDSMSEDGSDSDDDDDDEIVGKADP) is disordered. Positions 152 to 176 (ILSDDDDDDSMSEDGSDSDDDDDDE) are enriched in acidic residues.

Belongs to the ubiquitin-conjugating enzyme family. Expressed in roots, petals, sepals and silique walls.

The enzyme catalyses S-ubiquitinyl-[E1 ubiquitin-activating enzyme]-L-cysteine + [E2 ubiquitin-conjugating enzyme]-L-cysteine = [E1 ubiquitin-activating enzyme]-L-cysteine + S-ubiquitinyl-[E2 ubiquitin-conjugating enzyme]-L-cysteine.. Its pathway is protein modification; protein ubiquitination. Accepts the ubiquitin from the E1 complex and catalyzes its covalent attachment to other proteins. This is Ubiquitin-conjugating enzyme E2 6 (UBC6) from Arabidopsis thaliana (Mouse-ear cress).